A 521-amino-acid polypeptide reads, in one-letter code: Bifunctional purine biosynthesis protein PurH (521 aa).

An MGS-like domain is found at 1–145 (MIKQALISVS…KNHRDVTVVV (145 aa)).

Belongs to the PurH family.

The enzyme catalyses (6R)-10-formyltetrahydrofolate + 5-amino-1-(5-phospho-beta-D-ribosyl)imidazole-4-carboxamide = 5-formamido-1-(5-phospho-D-ribosyl)imidazole-4-carboxamide + (6S)-5,6,7,8-tetrahydrofolate. It carries out the reaction IMP + H2O = 5-formamido-1-(5-phospho-D-ribosyl)imidazole-4-carboxamide. It participates in purine metabolism; IMP biosynthesis via de novo pathway; 5-formamido-1-(5-phospho-D-ribosyl)imidazole-4-carboxamide from 5-amino-1-(5-phospho-D-ribosyl)imidazole-4-carboxamide (10-formyl THF route): step 1/1. It functions in the pathway purine metabolism; IMP biosynthesis via de novo pathway; IMP from 5-formamido-1-(5-phospho-D-ribosyl)imidazole-4-carboxamide: step 1/1. This Burkholderia cenocepacia (strain HI2424) protein is Bifunctional purine biosynthesis protein PurH.